The chain runs to 281 residues: CMT1A duplicated region transcript 15 protein-like protein (281 aa).

Disordered regions lie at residues Lys107–Ser131 and Ala150–Gly187. A compositionally biased stretch (basic and acidic residues) spans Pro108 to Glu120. Residues Ser165–Pro178 show a composition bias toward low complexity. A helical transmembrane segment spans residues Ala207–Ile227.

The protein resides in the membrane. In Homo sapiens (Human), this protein is CMT1A duplicated region transcript 15 protein-like protein (CDRT15L2).